We begin with the raw amino-acid sequence, 144 residues long: Small ribosomal subunit protein eS19 (144 aa).

This sequence belongs to the eukaryotic ribosomal protein eS19 family.

The polypeptide is Small ribosomal subunit protein eS19 (RPS19) (Argopecten irradians (Bay scallop)).